The primary structure comprises 557 residues: NADP-dependent malic enzyme (557 aa).

Y91 acts as the Proton donor in catalysis. R144 is a binding site for NADP(+). The Proton acceptor role is filled by K162. A divalent metal cation-binding residues include E234, D235, and D258. NADP(+) contacts are provided by residues D258, 290-307, and N397; that span reads GAGEAALGIANLIVMAME.

This sequence belongs to the malic enzymes family. As to quaternary structure, homotetramer. Mg(2+) serves as cofactor. Mn(2+) is required as a cofactor.

Its subcellular location is the cytoplasm. The catalysed reaction is (S)-malate + NADP(+) = pyruvate + CO2 + NADPH. It carries out the reaction oxaloacetate + H(+) = pyruvate + CO2. This chain is NADP-dependent malic enzyme (ME1), found in Anas platyrhynchos (Mallard).